A 166-amino-acid chain; its full sequence is Early E3 18.5 kDa glycoprotein (166 aa).

Residues Met-1–Ala-19 form the signal peptide. Over Asn-20 to Ile-131 the chain is Lumenal. A glycan (N-linked (GlcNAc...) asparagine; by host) is linked at Asn-31. Intrachain disulfides connect Cys-32–Cys-50 and Cys-44–Cys-106. 3 N-linked (GlcNAc...) asparagine; by host glycosylation sites follow: Asn-63, Asn-67, and Asn-97. The helical transmembrane segment at Ala-132–Val-152 threads the bilayer. Over Thr-153 to Pro-166 the chain is Cytoplasmic. The short motif at Lys-162 to Pro-166 is the Di-lysine motif element.

This sequence belongs to the adenoviridae E19 family. Post-translationally, both disulfide bonds are absolutely critical for the interaction with MHC antigens. In terms of processing, N-glycosylated; high-mannose.

The protein resides in the host endoplasmic reticulum membrane. In terms of biological role, binds and retains class I heavy chains in the endoplasmic reticulum during the early period of virus infection, thereby impairing their transport to the cell surface. Also delays the expression of class I alleles that it cannot affect by direct retention. Binds transporters associated with antigen processing (TAP) and acts as a tapasin inhibitor, preventing class I/TAP association. In consequence, infected cells are masked for immune recognition by cytotoxic T-lymphocytes. The sequence is that of Early E3 18.5 kDa glycoprotein from Human adenovirus B serotype 11 (strain BC34) (HAdV-11).